We begin with the raw amino-acid sequence, 481 residues long: E3 ubiquitin-protein ligase makorin-1 (481 aa).

3 consecutive C3H1-type zinc fingers follow at residues 55–82 (WTKQ…HDLS), 84–111 (SPYG…HSKP), and 208–235 (ETKK…HGDS). The segment at 236–263 (CDMCGLQVLHPVDAAQRSQHIKSCIEAH) is makorin-type Cys-His. The RING-type zinc-finger motif lies at 281-335 (CGICMEVVYEKANPSERRFGILSNCNHTYCLKCIRKWRSAKQFESKIIKSCPECR). A C3H1-type 4 zinc finger spans residues 364–393 (AMSNKACRYFDEGRGSCPFGGNCFYKHAYP).

As to quaternary structure, interacts with p53/TP53 and CDKN1A. Interacts with TERT, modulating telomere length homeostasis. Auto-ubiquitinated; which leads to proteasomal degradation. In terms of tissue distribution, highly expressed in embryo, in specific cell types of the central nervous system, in brain with the strongest levels of expression in the mantle layers and in testis. Moderate to low levels in somatic tissues.

It catalyses the reaction S-ubiquitinyl-[E2 ubiquitin-conjugating enzyme]-L-cysteine + [acceptor protein]-L-lysine = [E2 ubiquitin-conjugating enzyme]-L-cysteine + N(6)-ubiquitinyl-[acceptor protein]-L-lysine.. It functions in the pathway protein modification; protein ubiquitination. Its function is as follows. E3 ubiquitin ligase catalyzing the covalent attachment of ubiquitin moieties onto substrate proteins. These substrates include FILIP1, p53/TP53, CDKN1A and TERT. Keeps cells alive by suppressing p53/TP53 under normal conditions, but stimulates apoptosis by repressing CDKN1A under stress conditions. Acts as a negative regulator of telomerase. Has negative and positive effects on RNA polymerase II-dependent transcription. The protein is E3 ubiquitin-protein ligase makorin-1 (Mkrn1) of Mus musculus (Mouse).